The primary structure comprises 82 residues: Cytochrome c oxidase-assembly factor cox-23, mitochondrial (82 aa).

The interval 1–27 is disordered; the sequence is MAQAGSENKEPWNEETRAKFEGKSRSE. Basic and acidic residues predominate over residues 7–27; the sequence is ENKEPWNEETRAKFEGKSRSE. The region spanning 29–71 is the CHCH domain; it reads LDPCQEAAQRSIRCLHRNQGDRTMCSDYFEAYRECKKQWIERR. 2 consecutive short sequence motifs (cx9C motif) follow at residues 32–42 and 53–63; these read CQEAAQRSIRC and CSDYFEAYREC. 2 cysteine pairs are disulfide-bonded: cysteine 32–cysteine 63 and cysteine 42–cysteine 53.

It belongs to the COX23 family.

Its subcellular location is the mitochondrion intermembrane space. Functionally, required for the assembly of cytochrome c oxidase. The sequence is that of Cytochrome c oxidase-assembly factor cox-23, mitochondrial (cox-23) from Neurospora crassa (strain ATCC 24698 / 74-OR23-1A / CBS 708.71 / DSM 1257 / FGSC 987).